The chain runs to 236 residues: Small ribosomal subunit protein uS3 (236 aa).

Residues 39–107 enclose the KH type-2 domain; that stretch reads IRKFLKKELY…EISINIKEVK (69 aa). Basic and acidic residues predominate over residues 213 to 229; the sequence is QPEKKEEAPARDKEGRG. The tract at residues 213–236 is disordered; it reads QPEKKEEAPARDKEGRGTRRRGRQ.

Belongs to the universal ribosomal protein uS3 family. In terms of assembly, part of the 30S ribosomal subunit. Forms a tight complex with proteins S10 and S14.

Functionally, binds the lower part of the 30S subunit head. Binds mRNA in the 70S ribosome, positioning it for translation. This Wolinella succinogenes (strain ATCC 29543 / DSM 1740 / CCUG 13145 / JCM 31913 / LMG 7466 / NCTC 11488 / FDC 602W) (Vibrio succinogenes) protein is Small ribosomal subunit protein uS3.